A 345-amino-acid chain; its full sequence is Acetylserotonin O-methyltransferase (345 aa).

Residues Tyr-147, Trp-164, Asp-210, Gly-235–Phe-237, and Arg-252 contribute to the S-adenosyl-L-methionine site. His-255 functions as the Proton donor/acceptor in the catalytic mechanism. Substrate-binding residues include Asp-256, Asn-302, and Gln-306.

This sequence belongs to the class I-like SAM-binding methyltransferase superfamily. Cation-independent O-methyltransferase family. In terms of assembly, homodimer. As to expression, expressed in the pineal gland (at protein level). In the retina, very low expression is found at the mRNA level, and not at the protein level.

It carries out the reaction N-acetylserotonin + S-adenosyl-L-methionine = melatonin + S-adenosyl-L-homocysteine + H(+). The protein operates within aromatic compound metabolism; melatonin biosynthesis; melatonin from serotonin: step 1/2. Its function is as follows. Catalyzes the transfer of a methyl group onto N-acetylserotonin, producing melatonin (N-acetyl-5-methoxytryptamine). In terms of biological role, does not show Acetylserotonin O-methyltransferase activity. The protein is Acetylserotonin O-methyltransferase (ASMT) of Homo sapiens (Human).